The chain runs to 517 residues: 2,3-bisphosphoglycerate-independent phosphoglycerate mutase (517 aa).

Residues Asp14 and Ser64 each contribute to the Mn(2+) site. Catalysis depends on Ser64, which acts as the Phosphoserine intermediate. Residues His125, 155–156, Arg187, Arg193, 259–262, and Lys334 each bind substrate; these read RD and RPDR. Residues Asp401, His405, Asp442, His443, and His461 each contribute to the Mn(2+) site.

This sequence belongs to the BPG-independent phosphoglycerate mutase family. As to quaternary structure, monomer. The cofactor is Mn(2+).

It carries out the reaction (2R)-2-phosphoglycerate = (2R)-3-phosphoglycerate. Its pathway is carbohydrate degradation; glycolysis; pyruvate from D-glyceraldehyde 3-phosphate: step 3/5. In terms of biological role, catalyzes the interconversion of 2-phosphoglycerate and 3-phosphoglycerate. The sequence is that of 2,3-bisphosphoglycerate-independent phosphoglycerate mutase from Symbiobacterium thermophilum (strain DSM 24528 / JCM 14929 / IAM 14863 / T).